Here is a 578-residue protein sequence, read N- to C-terminus: Arginine--tRNA ligase (578 aa).

The short motif at 127-137 (PNLAKEMHVGH) is the 'HIGH' region element.

It belongs to the class-I aminoacyl-tRNA synthetase family. As to quaternary structure, monomer.

It is found in the cytoplasm. It catalyses the reaction tRNA(Arg) + L-arginine + ATP = L-arginyl-tRNA(Arg) + AMP + diphosphate. This Pseudomonas putida (strain ATCC 700007 / DSM 6899 / JCM 31910 / BCRC 17059 / LMG 24140 / F1) protein is Arginine--tRNA ligase.